The primary structure comprises 174 residues: Flavodoxin (174 aa).

The 162-residue stretch at 4 to 165 (VGLFYGSDTG…RVEKWCKQIY (162 aa)) folds into the Flavodoxin-like domain.

The protein belongs to the flavodoxin family. Requires FMN as cofactor.

Functionally, low-potential electron donor to a number of redox enzymes. In Haemophilus influenzae (strain ATCC 51907 / DSM 11121 / KW20 / Rd), this protein is Flavodoxin (fldA).